The chain runs to 772 residues: Tubulin monoglycylase TTLL3 (772 aa).

Residues 50–81 are disordered; it reads PTLLPPQKDLDSSAMGDSDTTEDEDEDEDEEF. The segment covering 68–81 has biased composition (acidic residues); it reads DTTEDEDEDEDEEF. Residues 151 to 510 enclose the TTL domain; sequence ARNVLKLVVK…RMLDRNCDTG (360 aa). ATP is bound by residues Lys-283, 289–290, 321–324, 334–336, and 378–379; these read RG, QKYI, KFD, and CN. Residue Arg-289 participates in a protein binding. Ser-381 provides a ligand contact to L-glutamate. Mg(2+) is bound by residues Asp-456, Glu-469, and Asn-471. Residue Glu-469 participates in ATP binding.

Mg(2+) is required as a cofactor. Expressed in brain, heart, kidney, testis, liver, lung, muscle, spleen, trachea and colon.

It localises to the cytoplasm. It is found in the cytoskeleton. The protein resides in the cell projection. Its subcellular location is the cilium. The protein localises to the cilium axoneme. It localises to the flagellum axoneme. The catalysed reaction is L-glutamyl-[protein] + glycine + ATP = glycyl-L-glutamyl-[protein] + ADP + phosphate + H(+). Functionally, monoglycylase which modifies alpha- and beta-tubulin, adding a single glycine on the gamma-carboxyl groups of specific glutamate residues to generate monoglycine side chains within the C-terminal tail of tubulin. Not involved in elongation step of the polyglycylation reaction. Preferentially glycylates a beta-tail peptide over the alpha-tail, although shifts its preference toward alpha-tail as beta-tail glutamylation increases. Competes with polyglutamylases for modification site on beta-tubulin substrate, thereby creating an anticorrelation between glycylation and glutamylation reactions. Together with TTLL8, mediates microtubule glycylation of primary and motile cilia, which is essential for their stability and maintenance. Involved in microtubule glycylation of primary cilia in colon which controls cell proliferation of epithelial cells and plays an essential role in colon cancer development. Together with TTLL8, glycylates sperm flagella which regulates axonemal dynein motor activity, thereby controlling flagellar beat, directional sperm swimming and male fertility. The chain is Tubulin monoglycylase TTLL3 from Homo sapiens (Human).